The primary structure comprises 120 residues: NAD(P)H-quinone oxidoreductase subunit 3, chloroplastic (120 aa).

3 helical membrane passes run 9-29 (IFWAFLIISSIIPILAFLISG), 64-84 (MFALVFVVFDVETVFLYPWAM), and 88-108 (VLGVSVFIEALIFVLIPIVGL).

This sequence belongs to the complex I subunit 3 family. As to quaternary structure, NDH is composed of at least 16 different subunits, 5 of which are encoded in the nucleus.

The protein resides in the plastid. It localises to the chloroplast thylakoid membrane. It carries out the reaction a plastoquinone + NADH + (n+1) H(+)(in) = a plastoquinol + NAD(+) + n H(+)(out). The catalysed reaction is a plastoquinone + NADPH + (n+1) H(+)(in) = a plastoquinol + NADP(+) + n H(+)(out). In terms of biological role, NDH shuttles electrons from NAD(P)H:plastoquinone, via FMN and iron-sulfur (Fe-S) centers, to quinones in the photosynthetic chain and possibly in a chloroplast respiratory chain. The immediate electron acceptor for the enzyme in this species is believed to be plastoquinone. Couples the redox reaction to proton translocation, and thus conserves the redox energy in a proton gradient. This is NAD(P)H-quinone oxidoreductase subunit 3, chloroplastic from Ceratophyllum demersum (Rigid hornwort).